We begin with the raw amino-acid sequence, 161 residues long: Allophycocyanin beta chain (161 aa).

Position 71 is an N4-methylasparagine (asparagine 71). Cysteine 81 serves as a coordination point for (2R,3E)-phycocyanobilin.

This sequence belongs to the phycobiliprotein family. Heterodimer of an alpha and a beta chain. In terms of processing, contains one covalently linked phycocyanobilin chromophore.

It is found in the plastid. Its subcellular location is the cyanelle thylakoid membrane. In terms of biological role, light-harvesting photosynthetic bile pigment-protein from the phycobiliprotein complex. Allophycocyanin has a maximum absorption at approximately 650 nanometers. The sequence is that of Allophycocyanin beta chain (apcB) from Cyanophora paradoxa.